The following is a 406-amino-acid chain: Argininosuccinate synthase (406 aa).

Residues 11–19 and alanine 38 contribute to the ATP site; that span reads AYSGGLDTS. Residues tyrosine 91 and serine 96 each coordinate L-citrulline. Position 121 (glycine 121) interacts with ATP. Threonine 123, asparagine 127, and aspartate 128 together coordinate L-aspartate. Residue asparagine 127 participates in L-citrulline binding. Positions 131, 181, 190, 266, and 278 each coordinate L-citrulline.

The protein belongs to the argininosuccinate synthase family. Type 1 subfamily. Homotetramer.

The protein resides in the cytoplasm. The enzyme catalyses L-citrulline + L-aspartate + ATP = 2-(N(omega)-L-arginino)succinate + AMP + diphosphate + H(+). It participates in amino-acid biosynthesis; L-arginine biosynthesis; L-arginine from L-ornithine and carbamoyl phosphate: step 2/3. The sequence is that of Argininosuccinate synthase from Campylobacter hominis (strain ATCC BAA-381 / DSM 21671 / CCUG 45161 / LMG 19568 / NCTC 13146 / CH001A).